A 431-amino-acid chain; its full sequence is MVSLEKNDHLMLARQLPLKSVALILAGGRGTRLKDLTNKRAKPAVHFGGKFRIIDFALSNCINSGIRRMGVITQYQSHTLVQHIQRGWSFFNEEMNEFVDLLPAQQRMKGENWYRGTADAVTQNLDIIRRYKAEYVVILAGDHIYKQDYSRMLIDHVEKGARCTVACMPVPIEEASAFGVMAVDENDKIIEFVEKPANPPSMPNDPSKSLASMGIYVFDADYLYELLEEDDRDENSSHDFGKDLIPKITEAGLAYAHPFPLSCVQSDPDAEPYWRDVGTLKAYWKANLDLASVVPELDMYDRNWPIRTYNESLPPAKFVQDRSGSHGMTLNSLVSGGCVISGSVVVQSVLFSRVRVNSFCNIDSAVLLPEVWVGRSCRLRRCVIDRACVIPEGMVIGENAEEDARRFYRSEEGIVLVTREMLRKLGHKQER.

Residue K39 coordinates beta-D-fructose 1,6-bisphosphate. 3 residues coordinate AMP: R40, H46, and R52. Residue Y114 participates in alpha-D-glucose 1-phosphate binding. R130 contacts AMP. Alpha-D-glucose 1-phosphate is bound by residues G179, 194 to 195, and S212; that span reads EK. Positions 370 and 386 each coordinate AMP. Beta-D-fructose 1,6-bisphosphate-binding positions include 419 to 423 and 429 to 431; these read REMLR and QER.

Belongs to the bacterial/plant glucose-1-phosphate adenylyltransferase family. Homotetramer.

It catalyses the reaction alpha-D-glucose 1-phosphate + ATP + H(+) = ADP-alpha-D-glucose + diphosphate. Its pathway is glycan biosynthesis; glycogen biosynthesis. Its activity is regulated as follows. Allosterically activated by fructose-1,6-bisphosphate (F16BP) and inhibited by AMP. Involved in the biosynthesis of ADP-glucose, a building block required for the elongation reactions to produce glycogen. Catalyzes the reaction between ATP and alpha-D-glucose 1-phosphate (G1P) to produce pyrophosphate and ADP-Glc. The protein is Glucose-1-phosphate adenylyltransferase of Shigella boydii serotype 18 (strain CDC 3083-94 / BS512).